We begin with the raw amino-acid sequence, 260 residues long: 3'-5' ssDNA/RNA exonuclease TatD (260 aa).

Residues Glu92, His128, and His153 each contribute to the a divalent metal cation site.

This sequence belongs to the metallo-dependent hydrolases superfamily. TatD-type hydrolase family. TatD subfamily. Monomer. Mg(2+) serves as cofactor.

It localises to the cytoplasm. Its function is as follows. 3'-5' exonuclease that prefers single-stranded DNA and RNA. May play a role in the H(2)O(2)-induced DNA damage repair. In Pantoea vagans (strain C9-1) (Pantoea agglomerans (strain C9-1)), this protein is 3'-5' ssDNA/RNA exonuclease TatD.